A 320-amino-acid polypeptide reads, in one-letter code: Ubiquinone biosynthesis protein COQ4, mitochondrial (320 aa).

A mitochondrion-targeting transit peptide spans 1–31 (MFARSALGRSDQLVTALNSQKRQFVLTAATT). Zn(2+) is bound by residues histidine 205, aspartate 206, histidine 209, and glutamate 221.

Belongs to the COQ4 family. As to quaternary structure, component of a multi-subunit COQ enzyme complex, composed of at least COQ3, COQ4, COQ5, COQ6, COQ7 and COQ9. It depends on Zn(2+) as a cofactor.

It is found in the mitochondrion inner membrane. It catalyses the reaction a 4-hydroxy-3-methoxy-5-(all-trans-polyprenyl)benzoate + H(+) = a 2-methoxy-6-(all-trans-polyprenyl)phenol + CO2. Its pathway is cofactor biosynthesis; ubiquinone biosynthesis. Functionally, lyase that catalyzes the C1-decarboxylation of 4-hydroxy-3-methoxy-5-(all-trans-polyprenyl)benzoic acid into 2-methoxy-6-(all-trans-polyprenyl)phenol during ubiquinone biosynthesis. This is Ubiquinone biosynthesis protein COQ4, mitochondrial from Scheffersomyces stipitis (strain ATCC 58785 / CBS 6054 / NBRC 10063 / NRRL Y-11545) (Yeast).